The following is a 124-amino-acid chain: Large ribosomal subunit protein bL20c (124 aa).

The protein belongs to the bacterial ribosomal protein bL20 family.

Its subcellular location is the plastid. It is found in the chloroplast. In terms of biological role, binds directly to 23S ribosomal RNA and is necessary for the in vitro assembly process of the 50S ribosomal subunit. It is not involved in the protein synthesizing functions of that subunit. The chain is Large ribosomal subunit protein bL20c from Stigeoclonium helveticum (Green alga).